A 335-amino-acid polypeptide reads, in one-letter code: Glucokinase (335 aa).

ATP is bound at residue Ala-11–Thr-16.

The protein belongs to the bacterial glucokinase family.

It is found in the cytoplasm. The catalysed reaction is D-glucose + ATP = D-glucose 6-phosphate + ADP + H(+). This chain is Glucokinase, found in Stenotrophomonas maltophilia (strain R551-3).